Reading from the N-terminus, the 398-residue chain is Subtilisin-like protease CPC735_015300 (398 aa).

Residues 1–19 (MGFIKTLSLSLAAASAANA) form the signal peptide. A propeptide spanning residues 20-116 (AKILSPSRPD…IEHDHVVRLT (97 aa)) is cleaved from the precursor. Residues 35-115 (QYIVVMKDGV…FIEHDHVVRL (81 aa)) form the Inhibitor I9 domain. The region spanning 126 to 398 (TWGLGRVSHQ…NKLTYNGNGQ (273 aa)) is the Peptidase S8 domain. Active-site charge relay system residues include Asp-158 and His-189. Residue Asn-250 is glycosylated (N-linked (GlcNAc...) asparagine). Ser-344 serves as the catalytic Charge relay system. N-linked (GlcNAc...) asparagine glycosylation is present at Asn-362.

The protein belongs to the peptidase S8 family.

It is found in the secreted. Its function is as follows. Secreted subtilisin-like serine protease with keratinolytic activity that contributes to pathogenicity. The protein is Subtilisin-like protease CPC735_015300 of Coccidioides posadasii (strain C735) (Valley fever fungus).